The following is a 115-amino-acid chain: UPF0295 protein BPUM_0828 (115 aa).

2 consecutive transmembrane segments (helical) span residues 13–33 (TFALSLVFVGFLIMYIGVFFK) and 41–61 (FFMLLGVLSIGLSTVVYFWIG).

This sequence belongs to the UPF0295 family.

The protein resides in the cell membrane. The polypeptide is UPF0295 protein BPUM_0828 (Bacillus pumilus (strain SAFR-032)).